A 141-amino-acid chain; its full sequence is MTVQSINHLLFSVSDLEKSIAFYENVFGAKLLVKGNSTAYFDVNGLWLALNVEKDIPRNDIQYSYTHIAFTISEDEFDKMYDKLVQLKVLILDGRQRDERDKKSIYFTDPDGHKFEFHTGTLQDRLDYYKKEKLHMEFFNH.

Residues 5 to 120 (SINHLLFSVS…DGHKFEFHTG (116 aa)) enclose the VOC domain. His-8, His-67, and Glu-116 together coordinate Mg(2+). Glu-116 acts as the Proton donor/acceptor in catalysis.

The protein belongs to the fosfomycin resistance protein family. FosB subfamily. In terms of assembly, homodimer. Requires Mg(2+) as cofactor.

The protein resides in the cytoplasm. In terms of biological role, metallothiol transferase which confers resistance to fosfomycin by catalyzing the addition of a thiol cofactor to fosfomycin. L-cysteine is probably the physiological thiol donor. In Lysinibacillus sphaericus (strain C3-41), this protein is Metallothiol transferase FosB.